The following is a 453-amino-acid chain: Trigger factor (453 aa).

In terms of domain architecture, PPIase FKBP-type spans 171–256; it reads GDRVTINFKG…ATSIEAPQDI (86 aa).

Belongs to the FKBP-type PPIase family. Tig subfamily.

It is found in the cytoplasm. The catalysed reaction is [protein]-peptidylproline (omega=180) = [protein]-peptidylproline (omega=0). Its function is as follows. Involved in protein export. Acts as a chaperone by maintaining the newly synthesized protein in an open conformation. Functions as a peptidyl-prolyl cis-trans isomerase. The polypeptide is Trigger factor (Bradyrhizobium diazoefficiens (strain JCM 10833 / BCRC 13528 / IAM 13628 / NBRC 14792 / USDA 110)).